Consider the following 152-residue polypeptide: Histone deacetylase complex subunit SAP18 (152 aa).

The interval Met-1 to Thr-38 is disordered. Over residues Pro-28–Thr-38 the composition is skewed to basic and acidic residues.

It belongs to the SAP18 family. In terms of assembly, interacts with SIN3, ERF3, ERF4 and HDA19. Ubiquitous, with low level in flowers.

Links the histone deacetylase complex to transcriptional repressors bound to chromatin. Involved in the tethering of the SIN3 complex to core histone proteins. The polypeptide is Histone deacetylase complex subunit SAP18 (Arabidopsis thaliana (Mouse-ear cress)).